The chain runs to 501 residues: Lysine--tRNA ligase (501 aa).

2 residues coordinate Mg(2+): glutamate 411 and glutamate 418.

Belongs to the class-II aminoacyl-tRNA synthetase family. As to quaternary structure, homodimer. It depends on Mg(2+) as a cofactor.

The protein resides in the cytoplasm. It catalyses the reaction tRNA(Lys) + L-lysine + ATP = L-lysyl-tRNA(Lys) + AMP + diphosphate. The polypeptide is Lysine--tRNA ligase (Clostridium perfringens (strain SM101 / Type A)).